The sequence spans 279 residues: Presqualene diphosphate synthase (279 aa).

This sequence belongs to the phytoene/squalene synthase family. HpnD subfamily.

The enzyme catalyses 2 (2E,6E)-farnesyl diphosphate = presqualene diphosphate + diphosphate. It participates in secondary metabolite biosynthesis; hopanoid biosynthesis. Functionally, involved in the biosynthesis of the hopanoid precursor squalene (SQ) from farnesyl diphosphate (FPP). Catalyzes the first step, the formation of presqualene diphosphate (PSPP) from two molecules of FPP. In Sinorhizobium fredii (strain NBRC 101917 / NGR234), this protein is Presqualene diphosphate synthase.